Reading from the N-terminus, the 357-residue chain is 3'(2'),5'-bisphosphate nucleotidase (357 aa).

The Proton acceptor role is filled by Asp49. Residues Glu72, Asp142, Ile144, and Asp145 each coordinate Mg(2+). The active-site Proton acceptor is the Thr147. Residues Thr147, His241, Ser264, Lys267, Arg281, and Asp294 each contribute to the adenosine 3',5'-bisphosphate site. AMP contacts are provided by His241, Ser264, Lys267, Arg281, and Asp294. Asp294 contacts Mg(2+).

This sequence belongs to the inositol monophosphatase superfamily. Mg(2+) serves as cofactor.

The protein localises to the cytoplasm. It is found in the nucleus. It carries out the reaction 3'-phosphoadenylyl sulfate + H2O = adenosine 5'-phosphosulfate + phosphate. The catalysed reaction is adenosine 3',5'-bisphosphate + H2O = AMP + phosphate. The enzyme catalyses adenosine 2',5'-bisphosphate + H2O = AMP + phosphate. Its activity is regulated as follows. Phosphatase activity is very sensitive to lithium and moderately sensitive to sodium. The inhibitory effects of lithium and sodium are overcome by high concentrations of potassium. Lithium exerts its inhibitory action by blocking the products of the PAP hydrolysis at the active site. In terms of biological role, phosphatase that converts adenosine 3'-phosphate 5'-phosphosulfate (PAPS) to adenosine 5'-phosphosulfate (APS) and 3'(2')-phosphoadenosine 5'-phosphate (PAP) to AMP. May regulate the flux of sulfur in the sulfur-activation pathway by converting PAPS to APS. Involved in salt tolerance. Confers resistance to lithium. Shows no activity on inositol mono- and diphosphates, 3'-AMP, AMP, nicotinamide adenine dinucleotide phosphate (NADP), and p-nitrophenylphosphate. The chain is 3'(2'),5'-bisphosphate nucleotidase (MET22) from Saccharomyces cerevisiae (strain ATCC 204508 / S288c) (Baker's yeast).